Here is a 233-residue protein sequence, read N- to C-terminus: Glucosamine-6-phosphate deaminase (233 aa).

The active-site Proton acceptor; for enolization step is the D62. N128 (for ring-opening step) is an active-site residue. H130 functions as the Proton acceptor; for ring-opening step in the catalytic mechanism. E135 acts as the For ring-opening step in catalysis.

The protein belongs to the glucosamine/galactosamine-6-phosphate isomerase family. NagB subfamily.

The enzyme catalyses alpha-D-glucosamine 6-phosphate + H2O = beta-D-fructose 6-phosphate + NH4(+). It functions in the pathway amino-sugar metabolism; N-acetylneuraminate degradation; D-fructose 6-phosphate from N-acetylneuraminate: step 5/5. Catalyzes the reversible isomerization-deamination of glucosamine 6-phosphate (GlcN6P) to form fructose 6-phosphate (Fru6P) and ammonium ion. This Enterococcus faecalis (strain ATCC 700802 / V583) protein is Glucosamine-6-phosphate deaminase.